Here is a 316-residue protein sequence, read N- to C-terminus: Ribosomal protein L11 methyltransferase (316 aa).

S-adenosyl-L-methionine is bound by residues Thr157, Gly178, Asp200, and Asn243.

The protein belongs to the methyltransferase superfamily. PrmA family.

It localises to the cytoplasm. The catalysed reaction is L-lysyl-[protein] + 3 S-adenosyl-L-methionine = N(6),N(6),N(6)-trimethyl-L-lysyl-[protein] + 3 S-adenosyl-L-homocysteine + 3 H(+). Its function is as follows. Methylates ribosomal protein L11. The sequence is that of Ribosomal protein L11 methyltransferase from Streptococcus pneumoniae (strain ATCC 700669 / Spain 23F-1).